Here is a 360-residue protein sequence, read N- to C-terminus: S-adenosylmethionine:tRNA ribosyltransferase-isomerase (360 aa).

It belongs to the QueA family. As to quaternary structure, monomer.

The protein localises to the cytoplasm. The catalysed reaction is 7-aminomethyl-7-carbaguanosine(34) in tRNA + S-adenosyl-L-methionine = epoxyqueuosine(34) in tRNA + adenine + L-methionine + 2 H(+). Its pathway is tRNA modification; tRNA-queuosine biosynthesis. Its function is as follows. Transfers and isomerizes the ribose moiety from AdoMet to the 7-aminomethyl group of 7-deazaguanine (preQ1-tRNA) to give epoxyqueuosine (oQ-tRNA). This is S-adenosylmethionine:tRNA ribosyltransferase-isomerase from Nitrobacter winogradskyi (strain ATCC 25391 / DSM 10237 / CIP 104748 / NCIMB 11846 / Nb-255).